The primary structure comprises 560 residues: Nitrite reductase (560 aa).

The signal sequence occupies residues 1-26 (MSNVGKPILAGLIAGLSLLGLAVAQA). The N-terminal tail stretch occupies residues 27–29 (AAP). The 97-residue stretch at 30-126 (EMTAEEKEAS…ARYIQHTPDI (97 aa)) folds into the Cytochrome c domain. Positions 47, 50, and 51 each coordinate heme c. The interval 61–80 (KNLEPHWSKTEADGKKTEGG) is disordered. Basic and acidic residues predominate over residues 63–78 (LEPHWSKTEADGKKTE). 2 residues coordinate heme c: Thr-97 and Met-101. The D1-heme domain stretch occupies residues 127-560 (PPEFSLQDMK…NVFNTMNDVY (434 aa)). His-193, Arg-236, Ser-237, Tyr-256, Arg-382, and Gln-500 together coordinate heme d1.

As to quaternary structure, homodimer in solution. Requires heme c as cofactor. Heme serves as cofactor.

It localises to the periplasm. The enzyme catalyses nitric oxide + Fe(III)-[cytochrome c] + H2O = Fe(II)-[cytochrome c] + nitrite + 2 H(+). It catalyses the reaction A + NH4(+) + H2O = hydroxylamine + AH2 + H(+). This chain is Nitrite reductase (nirS), found in Stutzerimonas stutzeri (Pseudomonas stutzeri).